A 273-amino-acid polypeptide reads, in one-letter code: Large ribosomal subunit protein uL2 (273 aa).

The interval 228 to 273 (IDHPHGGGEGKTSGGRHPVTPWGFSTKGKKTRKNKRTSKFIVKKRK) is disordered. Positions 254 to 273 (KGKKTRKNKRTSKFIVKKRK) are enriched in basic residues.

Belongs to the universal ribosomal protein uL2 family. Part of the 50S ribosomal subunit. Forms a bridge to the 30S subunit in the 70S ribosome.

Its function is as follows. One of the primary rRNA binding proteins. Required for association of the 30S and 50S subunits to form the 70S ribosome, for tRNA binding and peptide bond formation. It has been suggested to have peptidyltransferase activity; this is somewhat controversial. Makes several contacts with the 16S rRNA in the 70S ribosome. This Rickettsia typhi (strain ATCC VR-144 / Wilmington) protein is Large ribosomal subunit protein uL2.